We begin with the raw amino-acid sequence, 179 residues long: Protein GrpE (179 aa).

The segment at 1–45 is disordered; that stretch reads MSEEKLTQDPTAEEEQTETADQQESADVNWEQEAAHWKAQAEEHQ. Residues 33 to 45 are compositionally biased toward basic and acidic residues; the sequence is EAAHWKAQAEEHQ.

Belongs to the GrpE family. Homodimer.

It is found in the cytoplasm. Its function is as follows. Participates actively in the response to hyperosmotic and heat shock by preventing the aggregation of stress-denatured proteins, in association with DnaK and GrpE. It is the nucleotide exchange factor for DnaK and may function as a thermosensor. Unfolded proteins bind initially to DnaJ; upon interaction with the DnaJ-bound protein, DnaK hydrolyzes its bound ATP, resulting in the formation of a stable complex. GrpE releases ADP from DnaK; ATP binding to DnaK triggers the release of the substrate protein, thus completing the reaction cycle. Several rounds of ATP-dependent interactions between DnaJ, DnaK and GrpE are required for fully efficient folding. The polypeptide is Protein GrpE (Brevibacillus choshinensis).